The following is a 212-amino-acid chain: Ras-related protein Rab-15 (212 aa).

GTP is bound by residues serine 17, glycine 18, valine 19, glycine 20, lysine 21, threonine 22, cysteine 23, serine 35, serine 39, and threonine 40. Threonine 22 serves as a coordination point for Mg(2+). 2 short sequence motifs (switch) span residues 31-45 (NEFH…GVDF) and 63-80 (DTAG…YYRR). Positions 40 and 63 each coordinate Mg(2+). 6 residues coordinate GTP: glycine 66, asparagine 121, lysine 122, aspartate 124, serine 151, and alanine 152. The segment at 192–212 (ELEEDEGKPEGPANSSKTCWC) is disordered. 2 S-geranylgeranyl cysteine lipidation sites follow: cysteine 210 and cysteine 212. Position 212 is a cysteine methyl ester (cysteine 212).

It belongs to the small GTPase superfamily. Rab family. As to quaternary structure, the GTP bound form of RAB15 interacts with REP15. Interacts (GTP-bound form) with MICAL1, MICAL3, MICALCL, EHBP1 and EHBP1L1. Mg(2+) serves as cofactor.

The protein localises to the cell membrane. It catalyses the reaction GTP + H2O = GDP + phosphate + H(+). Regulated by guanine nucleotide exchange factors (GEFs) which promote the exchange of bound GDP for free GTP. Regulated by GTPase activating proteins (GAPs) which increase the GTP hydrolysis activity. Inhibited by GDP dissociation inhibitors (GDIs). In terms of biological role, the small GTPases Rab are key regulators of intracellular membrane trafficking, from the formation of transport vesicles to their fusion with membranes. Rabs cycle between an inactive GDP-bound form and an active GTP-bound form that is able to recruit to membranes different sets of downstream effectors directly responsible for vesicle formation, movement, tethering and fusion. RAB15 may act in concert with RAB3A in regulating aspects of synaptic vesicle membrane flow within the nerve terminal. This chain is Ras-related protein Rab-15, found in Mus musculus (Mouse).